The following is a 345-amino-acid chain: Leucine-rich repeat-containing protein 69 (345 aa).

10 LRR repeats span residues 13-34 (KAKT…VGCL), 36-58 (SLTE…SALC), 59-80 (RLRV…IKYL), 82-103 (CLER…ALDG), 106-127 (NLLF…IYKL), 129-151 (SLET…CFLQ), 152-173 (NLQE…LSYL), 175-196 (NLKE…ICKL), 198-219 (KLKI…MHRV), and 220-241 (PLTE…FARQ).

Belongs to the LRRC69 family.

The sequence is that of Leucine-rich repeat-containing protein 69 (lrrc69) from Xenopus laevis (African clawed frog).